A 404-amino-acid polypeptide reads, in one-letter code: Cysteine desulfurase IscS (404 aa).

Residues 75–76 (AT), Asn155, Gln183, and 203–205 (SSH) contribute to the pyridoxal 5'-phosphate site. Lys206 bears the N6-(pyridoxal phosphate)lysine mark. Thr243 contributes to the pyridoxal 5'-phosphate binding site. The active-site Cysteine persulfide intermediate is Cys328. Cys328 lines the [2Fe-2S] cluster pocket.

Belongs to the class-V pyridoxal-phosphate-dependent aminotransferase family. NifS/IscS subfamily. As to quaternary structure, homodimer. Forms a heterotetramer with IscU, interacts with other sulfur acceptors. The cofactor is pyridoxal 5'-phosphate.

It localises to the cytoplasm. It carries out the reaction (sulfur carrier)-H + L-cysteine = (sulfur carrier)-SH + L-alanine. It participates in cofactor biosynthesis; iron-sulfur cluster biosynthesis. Functionally, master enzyme that delivers sulfur to a number of partners involved in Fe-S cluster assembly, tRNA modification or cofactor biosynthesis. Catalyzes the removal of elemental sulfur atoms from cysteine to produce alanine. Functions as a sulfur delivery protein for Fe-S cluster synthesis onto IscU, an Fe-S scaffold assembly protein, as well as other S acceptor proteins. This chain is Cysteine desulfurase IscS, found in Histophilus somni (strain 2336) (Haemophilus somnus).